The following is a 634-amino-acid chain: Biosynthetic arginine decarboxylase (634 aa).

Lys103 carries the N6-(pyridoxal phosphate)lysine modification. Residue 283–293 participates in substrate binding; sequence FDVGGGLGVDY.

The protein belongs to the Orn/Lys/Arg decarboxylase class-II family. SpeA subfamily. Requires Mg(2+) as cofactor. Pyridoxal 5'-phosphate is required as a cofactor.

The enzyme catalyses L-arginine + H(+) = agmatine + CO2. The protein operates within amine and polyamine biosynthesis; agmatine biosynthesis; agmatine from L-arginine: step 1/1. Catalyzes the biosynthesis of agmatine from arginine. The sequence is that of Biosynthetic arginine decarboxylase from Photorhabdus laumondii subsp. laumondii (strain DSM 15139 / CIP 105565 / TT01) (Photorhabdus luminescens subsp. laumondii).